The following is an 88-amino-acid chain: UPF0297 protein EAT1b_2723 (88 aa).

This sequence belongs to the UPF0297 family.

This chain is UPF0297 protein EAT1b_2723, found in Exiguobacterium sp. (strain ATCC BAA-1283 / AT1b).